A 738-amino-acid polypeptide reads, in one-letter code: Protein Aster-B (738 aa).

The interval 1 to 81 (MKGFKLSCTA…SGGKNSKKSQ (81 aa)) is disordered. A compositionally biased stretch (polar residues) spans 8–19 (CTASNSNRSTPA). Ser-28 and Ser-30 each carry phosphoserine. The segment covering 41–51 (MVEKGSDHSSD) has biased composition (basic and acidic residues). Over residues 59-70 (QGVQRSCSSQSG) the composition is skewed to low complexity. Residues 96 to 163 (EDFRKLFKQL…KDICSMTKEK (68 aa)) enclose the GRAM domain. The disordered stretch occupies residues 254-301 (EENEVNDSSSKSSIETKPDASPQLPKKSITNSTLTSTGSSEAPVSFDG). The segment covering 259 to 268 (NDSSSKSSIE) has biased composition (polar residues). Ser-274 carries the phosphoserine modification. Positions 281–295 (SITNSTLTSTGSSEA) are enriched in polar residues. The VASt domain occupies 372-543 (SGRQYVNEVF…ELAKTESTYL (172 aa)). At Tyr-389 the chain carries Phosphotyrosine. The segment at 544 to 566 (AEMHRQSPKEKASKTTTVRRRKR) is disordered. The span at 545 to 556 (EMHRQSPKEKAS) shows a compositional bias: basic and acidic residues. Phosphoserine occurs at positions 550 and 581. Phosphothreonine is present on residues Thr-584, Thr-585, and Thr-587. The helical transmembrane segment at 623–643 (LLLVISCVICFSLVLLVILNM) threads the bilayer.

The protein resides in the endoplasmic reticulum membrane. The protein localises to the cell membrane. Its function is as follows. Cholesterol transporter that mediates non-vesicular transport of cholesterol from the plasma membrane (PM) to the endoplasmic reticulum (ER). Contains unique domains for binding cholesterol and the PM, thereby serving as a molecular bridge for the transfer of cholesterol from the PM to the ER. Plays a crucial role in cholesterol homeostasis in the adrenal gland and has the unique ability to localize to the PM based on the level of membrane cholesterol. In lipid-poor conditions localizes to the ER membrane and in response to excess cholesterol in the PM is recruited to the endoplasmic reticulum-plasma membrane contact sites (EPCS) which is mediated by the GRAM domain. At the EPCS, the sterol-binding VASt/ASTER domain binds to the cholesterol in the PM and facilitates its transfer from the PM to ER. This chain is Protein Aster-B (GRAMD1B), found in Homo sapiens (Human).